Here is a 216-residue protein sequence, read N- to C-terminus: Protein Syd (216 aa).

The protein belongs to the Syd family.

It localises to the cell inner membrane. Functionally, interacts with the SecY protein in vivo. May bind preferentially to an uncomplexed state of SecY, thus functioning either as a chelating agent for excess SecY in the cell or as a regulatory factor that negatively controls the translocase function. In Shewanella sp. (strain MR-4), this protein is Protein Syd.